The chain runs to 172 residues: Shikimate kinase (172 aa).

11-16 (GSGKTT) is a binding site for ATP. Position 15 (Thr-15) interacts with Mg(2+). Residues Asp-33, Arg-57, and Gly-79 each coordinate substrate. Arg-117 lines the ATP pocket. Arg-136 is a substrate binding site.

Belongs to the shikimate kinase family. Monomer. Mg(2+) serves as cofactor.

The protein resides in the cytoplasm. It carries out the reaction shikimate + ATP = 3-phosphoshikimate + ADP + H(+). The protein operates within metabolic intermediate biosynthesis; chorismate biosynthesis; chorismate from D-erythrose 4-phosphate and phosphoenolpyruvate: step 5/7. In terms of biological role, catalyzes the specific phosphorylation of the 3-hydroxyl group of shikimic acid using ATP as a cosubstrate. This chain is Shikimate kinase, found in Caldicellulosiruptor bescii (strain ATCC BAA-1888 / DSM 6725 / KCTC 15123 / Z-1320) (Anaerocellum thermophilum).